The chain runs to 264 residues: uncharacterized protein (264 aa).

A disordered region spans residues 57 to 264; it reads RPPASPCPPR…VYPHPHLTAT (208 aa). The segment covering 140–153 has biased composition (basic residues); the sequence is GKARRSPGRRRHPH. A compositionally biased stretch (low complexity) spans 154–165; sequence SSFPQASSPSSP.

This is an uncharacterized protein from Homo sapiens (Human).